A 143-amino-acid polypeptide reads, in one-letter code: Hemoglobin subunit alpha-1 (143 aa).

An N-acetylserine modification is found at S2. The Globin domain maps to 2–143 (SLSSKDKATV…RALALAEKYR (142 aa)). O2 is bound at residue H60. H89 lines the heme b pocket.

This sequence belongs to the globin family. In terms of assembly, hb 1 is a heterotetramer of two alpha-1 and two beta-1 chains. Hb 3 is a heterotetramer of two alpha-1 and two beta-2 chains. As to expression, red blood cells.

In terms of biological role, involved in oxygen transport from gills to the various peripheral tissues. This chain is Hemoglobin subunit alpha-1 (hba1), found in Gadus morhua (Atlantic cod).